The chain runs to 215 residues: Pyrrolidone-carboxylate peptidase (215 aa).

Active-site residues include glutamate 80, cysteine 143, and histidine 167.

This sequence belongs to the peptidase C15 family. In terms of assembly, homotetramer.

The protein localises to the cytoplasm. It carries out the reaction Release of an N-terminal pyroglutamyl group from a polypeptide, the second amino acid generally not being Pro.. Its function is as follows. Removes 5-oxoproline from various penultimate amino acid residues except L-proline. The protein is Pyrrolidone-carboxylate peptidase of Bacillus cereus (strain B4264).